We begin with the raw amino-acid sequence, 377 residues long: MSSIQGTSGSSPERLPNSREDEGMNPEGVTPSGQTISFSAVGKSTSAEDIQQLALPIIQSDAMASSPSVGGAVGEVEVAEIIADVMEKNDANVQKLDEDMEALLQAISSSEEQLESPGVRNKSALKGTNRSNSHREEIARNQRLRSLSVRHGLAYNRHSLRRLARGIRHHAGLVTASFATLHKTLRAVPQEDLKSILGKDSDTVLARLHKLGLEVNEKGEWRLRANGEVGSINQSICNLARSAERLHDDGPLSINDQASEEEVTACCSAGRRACQFLQEHLMGALRAIYYQILRFFHWISRRVEVEPEDTDYYMRPGIFINPYASYLSSSPSVEDPRSLRDRLRDGGALSGEDTLFSMPQDESLDSESVSDDDRGFQ.

2 stretches are compositionally biased toward polar residues: residues 1 to 11 and 31 to 43; these read MSSIQGTSGSS and PSGQTISFSAVGK. Disordered regions lie at residues 1–43, 109–141, and 328–377; these read MSSI…AVGK, SSEEQLESPGVRNKSALKGTNRSNSHREEIARN, and SSSP…RGFQ. Basic and acidic residues predominate over residues 334–345; the sequence is EDPRSLRDRLRD.

This sequence belongs to the chlamydial CPn_0499/CT_392/TC_0671 family.

This is an uncharacterized protein from Chlamydia trachomatis serovar D (strain ATCC VR-885 / DSM 19411 / UW-3/Cx).